The chain runs to 356 residues: Homoserine O-acetyltransferase (356 aa).

Positions 50-335 (NVILVCHALT…DEPYGHDAFL (286 aa)) constitute an AB hydrolase-1 domain. Catalysis depends on serine 146, which acts as the Nucleophile. Arginine 215 is a substrate binding site. Catalysis depends on residues aspartate 302 and histidine 331. Aspartate 332 is a binding site for substrate.

This sequence belongs to the AB hydrolase superfamily. MetX family. Homodimer.

Its subcellular location is the cytoplasm. It carries out the reaction L-homoserine + acetyl-CoA = O-acetyl-L-homoserine + CoA. It functions in the pathway amino-acid biosynthesis; L-methionine biosynthesis via de novo pathway; O-acetyl-L-homoserine from L-homoserine: step 1/1. Functionally, transfers an acetyl group from acetyl-CoA to L-homoserine, forming acetyl-L-homoserine. The sequence is that of Homoserine O-acetyltransferase from Chlorobaculum parvum (strain DSM 263 / NCIMB 8327) (Chlorobium vibrioforme subsp. thiosulfatophilum).